The primary structure comprises 515 residues: Maturase K (515 aa).

This sequence belongs to the intron maturase 2 family. MatK subfamily.

It localises to the plastid. The protein localises to the chloroplast. Usually encoded in the trnK tRNA gene intron. Probably assists in splicing its own and other chloroplast group II introns. This Cedrus deodara (Deodar cedar) protein is Maturase K.